A 269-amino-acid polypeptide reads, in one-letter code: Putative imidazole glycerol phosphate synthase subunit hisF2 (269 aa).

The active site involves Asp133.

The protein belongs to the HisA/HisF family. In terms of assembly, heterodimer of HisH and HisF.

The protein resides in the cytoplasm. The catalysed reaction is 5-[(5-phospho-1-deoxy-D-ribulos-1-ylimino)methylamino]-1-(5-phospho-beta-D-ribosyl)imidazole-4-carboxamide + L-glutamine = D-erythro-1-(imidazol-4-yl)glycerol 3-phosphate + 5-amino-1-(5-phospho-beta-D-ribosyl)imidazole-4-carboxamide + L-glutamate + H(+). It functions in the pathway amino-acid biosynthesis; L-histidine biosynthesis; L-histidine from 5-phospho-alpha-D-ribose 1-diphosphate: step 5/9. Its function is as follows. IGPS catalyzes the conversion of PRFAR and glutamine to IGP, AICAR and glutamate. The HisF subunit catalyzes the cyclization activity that produces IGP and AICAR from PRFAR using the ammonia provided by the HisH subunit. The polypeptide is Putative imidazole glycerol phosphate synthase subunit hisF2 (hisF2) (Parasynechococcus marenigrum (strain WH8102)).